The primary structure comprises 399 residues: Probable peptidoglycan glycosyltransferase FtsW (399 aa).

Transmembrane regions (helical) follow at residues 33 to 53 (LVWL…STSI), 71 to 91 (IFYF…PIIF), 98 to 118 (IILI…HSIH), 160 to 180 (FWGF…LLAE), 182 to 202 (DLGT…LSGA), 204 to 224 (IGQF…LILL), 287 to 307 (IIGE…IFTI), 324 to 344 (IFSG…TSIN), and 359 to 379 (LPFI…IFFL).

This sequence belongs to the SEDS family. FtsW subfamily.

It is found in the cell inner membrane. It catalyses the reaction [GlcNAc-(1-&gt;4)-Mur2Ac(oyl-L-Ala-gamma-D-Glu-L-Lys-D-Ala-D-Ala)](n)-di-trans,octa-cis-undecaprenyl diphosphate + beta-D-GlcNAc-(1-&gt;4)-Mur2Ac(oyl-L-Ala-gamma-D-Glu-L-Lys-D-Ala-D-Ala)-di-trans,octa-cis-undecaprenyl diphosphate = [GlcNAc-(1-&gt;4)-Mur2Ac(oyl-L-Ala-gamma-D-Glu-L-Lys-D-Ala-D-Ala)](n+1)-di-trans,octa-cis-undecaprenyl diphosphate + di-trans,octa-cis-undecaprenyl diphosphate + H(+). It participates in cell wall biogenesis; peptidoglycan biosynthesis. Functionally, peptidoglycan polymerase that is essential for cell division. The polypeptide is Probable peptidoglycan glycosyltransferase FtsW (Buchnera aphidicola subsp. Acyrthosiphon pisum (strain APS) (Acyrthosiphon pisum symbiotic bacterium)).